The chain runs to 608 residues: Growth hormone receptor (608 aa).

Positions M1–N16 are cleaved as a signal peptide. Residues D17–E237 are Extracellular-facing. 2 disulfides stabilise this stretch: C34–C44 and C72–C83. An N-linked (GlcNAc...) asparagine glycan is attached at N86. An intrachain disulfide couples C97 to C111. The 105-residue stretch at P122 to G226 folds into the Fibronectin type-III domain. Residues N127, N132, and N171 are each glycosylated (N-linked (GlcNAc...) asparagine). The WSXWS motif signature appears at F211–S215. Residues F238–S261 traverse the membrane as a helical segment. The Cytoplasmic segment spans residues K262 to P608. A required for JAK2 binding region spans residues K267–A352. A Box 1 motif motif is present at residues I270–K278. The short motif at D313–D322 is the UbE motif element. Composition is skewed to polar residues over residues A413 to S426 and S438 to S451. The interval A413 to S451 is disordered.

The protein belongs to the type I cytokine receptor family. Type 1 subfamily. On GH binding, proteolytically cleaved, in vitro, to produce GHBP. Broad specificity.

It is found in the cell membrane. The protein localises to the secreted. Its function is as follows. Receptor for pituitary gland growth hormone (GH1) involved in regulating postnatal body growth. On ligand binding, couples to the JAK2/STAT5 pathway. In terms of biological role, the soluble form (GHBP) acts as a reservoir of growth hormone in plasma and may be a modulator/inhibitor of GH signaling. The polypeptide is Growth hormone receptor (GHR) (Gallus gallus (Chicken)).